A 70-amino-acid polypeptide reads, in one-letter code: Large ribosomal subunit protein bL31c (70 aa).

Belongs to the bacterial ribosomal protein bL31 family. Type A subfamily. In terms of assembly, part of the 50S ribosomal subunit.

It localises to the plastid. Its subcellular location is the chloroplast. Its function is as follows. Binds the 23S rRNA. The chain is Large ribosomal subunit protein bL31c from Porphyra purpurea (Red seaweed).